The primary structure comprises 223 residues: Ribose-5-phosphate isomerase A (223 aa).

Substrate is bound by residues 29–32 (TGST), 82–85 (DGAD), and 95–98 (KGGG). Residue E104 is the Proton acceptor of the active site. K122 serves as a coordination point for substrate.

It belongs to the ribose 5-phosphate isomerase family. In terms of assembly, homodimer.

It carries out the reaction aldehydo-D-ribose 5-phosphate = D-ribulose 5-phosphate. The protein operates within carbohydrate degradation; pentose phosphate pathway; D-ribose 5-phosphate from D-ribulose 5-phosphate (non-oxidative stage): step 1/1. Functionally, catalyzes the reversible conversion of ribose-5-phosphate to ribulose 5-phosphate. This chain is Ribose-5-phosphate isomerase A, found in Neisseria gonorrhoeae (strain ATCC 700825 / FA 1090).